Consider the following 464-residue polypeptide: Methylenetetrahydrofolate--tRNA-(uracil-5-)-methyltransferase TrmFO (464 aa).

13-18 (GGGLAG) lines the FAD pocket.

It belongs to the MnmG family. TrmFO subfamily. Requires FAD as cofactor.

It localises to the cytoplasm. It carries out the reaction uridine(54) in tRNA + (6R)-5,10-methylene-5,6,7,8-tetrahydrofolate + NADH + H(+) = 5-methyluridine(54) in tRNA + (6S)-5,6,7,8-tetrahydrofolate + NAD(+). It catalyses the reaction uridine(54) in tRNA + (6R)-5,10-methylene-5,6,7,8-tetrahydrofolate + NADPH + H(+) = 5-methyluridine(54) in tRNA + (6S)-5,6,7,8-tetrahydrofolate + NADP(+). In terms of biological role, catalyzes the folate-dependent formation of 5-methyl-uridine at position 54 (M-5-U54) in all tRNAs. The sequence is that of Methylenetetrahydrofolate--tRNA-(uracil-5-)-methyltransferase TrmFO from Bartonella bacilliformis (strain ATCC 35685 / KC583 / Herrer 020/F12,63).